A 233-amino-acid polypeptide reads, in one-letter code: Cytochrome c oxidase subunit 3 (233 aa).

The next 4 helical transmembrane spans lie at 62–82 (VVLF…AYLI), 98–118 (LELL…FVMH), 135–155 (WFGI…YEYF), and 172–192 (VLTG…LSVL).

This sequence belongs to the cytochrome c oxidase subunit 3 family.

The protein localises to the cell membrane. It carries out the reaction 4 Fe(II)-[cytochrome c] + O2 + 8 H(+)(in) = 4 Fe(III)-[cytochrome c] + 2 H2O + 4 H(+)(out). The sequence is that of Cytochrome c oxidase subunit 3 (ctaE) from Synechocystis sp. (strain ATCC 27184 / PCC 6803 / Kazusa).